The primary structure comprises 70 residues: Small ribosomal subunit protein bS21 (70 aa).

This sequence belongs to the bacterial ribosomal protein bS21 family.

In Campylobacter fetus subsp. fetus (strain 82-40), this protein is Small ribosomal subunit protein bS21.